Here is a 289-residue protein sequence, read N- to C-terminus: MDRPDLPLNALRVFEVAMRQGSFTKAAIELRVTQAAVSHQVARLEDLLGTALFLRTSQGLIPTDEGRLLFPVLEHGFDAMSRVLDRLGGRRDIEVLKVGVNTTFAMCWLMPRLEAFRQAHPQIDLRISTNNNRVEILREGLDMAIRFGTGGWTGHDAIPLAEAPMAPLCAPGLASRLLHPSDLGQVTLLRSYRSAEWPGWFEAAGVPCPPVTGPVFDSSVALAELATSGAGVALLPISMFESYIAQGRLAQPFGVTVSVGRYYLAWPSDRPATSAMSTFSRWLTGQSAE.

The region spanning Leu-6–Thr-63 is the HTH lysR-type domain. The segment at residues Phe-23–Ala-42 is a DNA-binding region (H-T-H motif).

Belongs to the LysR transcriptional regulatory family.

It localises to the cytoplasm. This protein is a positive regulator of gene expression of cephalosporinase (AmpC). In Rhodobacter capsulatus (Rhodopseudomonas capsulata), this protein is HTH-type transcriptional activator AmpR (ampR).